The sequence spans 51 residues: UPF0337 protein NE0131 (51 aa).

Belongs to the UPF0337 (CsbD) family.

This Nitrosomonas europaea (strain ATCC 19718 / CIP 103999 / KCTC 2705 / NBRC 14298) protein is UPF0337 protein NE0131.